Reading from the N-terminus, the 564-residue chain is Sulfite reductase [NADPH] hemoprotein beta-component 2 (564 aa).

Cysteine 426, cysteine 432, cysteine 471, and cysteine 475 together coordinate [4Fe-4S] cluster. A siroheme-binding site is contributed by cysteine 475.

The protein belongs to the nitrite and sulfite reductase 4Fe-4S domain family. In terms of assembly, alpha(8)-beta(8). The alpha component is a flavoprotein, the beta component is a hemoprotein. The cofactor is siroheme. [4Fe-4S] cluster is required as a cofactor.

The enzyme catalyses hydrogen sulfide + 3 NADP(+) + 3 H2O = sulfite + 3 NADPH + 4 H(+). Its pathway is sulfur metabolism; hydrogen sulfide biosynthesis; hydrogen sulfide from sulfite (NADPH route): step 1/1. Its function is as follows. Component of the sulfite reductase complex that catalyzes the 6-electron reduction of sulfite to sulfide. This is one of several activities required for the biosynthesis of L-cysteine from sulfate. The chain is Sulfite reductase [NADPH] hemoprotein beta-component 2 from Klebsiella pneumoniae (strain 342).